The primary structure comprises 968 residues: Alanine--tRNA ligase, cytoplasmic (968 aa).

Residue M1 is modified to N-acetylmethionine. S3 carries the post-translational modification Phosphoserine. K19 carries the post-translational modification N6-acetyllysine. ATP is bound by residues R77, H95, W176, and 214-216 (IWN). Positions 216 and 239 each coordinate L-alanine. G243 provides a ligand contact to ATP. Residues S399 and S555 each carry the phosphoserine modification. The Zn(2+) site is built by H605, H609, C723, and H727. Residues 750–763 (RRIVAVTGAEAQKA) carry the Nuclear localization signal motif. At K876 the chain carries N6-acetyllysine. The residue at position 943 (K943) is an N6,N6,N6-trimethyllysine; alternate. K943 bears the N6,N6-dimethyllysine; alternate mark. An N6-methyllysine; alternate modification is found at K943.

It belongs to the class-II aminoacyl-tRNA synthetase family. Monomer. Interacts with ANKRD16; the interaction is direct. Requires Zn(2+) as cofactor. ISGylated. Post-translationally, methylation at 'Lys-943' by METTL21C.

It is found in the cytoplasm. The protein localises to the nucleus. The catalysed reaction is tRNA(Ala) + L-alanine + ATP = L-alanyl-tRNA(Ala) + AMP + diphosphate. It carries out the reaction (S)-lactate + ATP + H(+) = (S)-lactoyl-AMP + diphosphate. The enzyme catalyses (S)-lactoyl-AMP + L-lysyl-[protein] = N(6)-[(S)-lactoyl]-L-lysyl-[protein] + AMP + 2 H(+). Its activity is regulated as follows. The protein lactyltransferase activity is inhibited by beta-alanine. In terms of biological role, catalyzes the attachment of alanine to tRNA(Ala) in a two-step reaction: alanine is first activated by ATP to form Ala-AMP and then transferred to the acceptor end of tRNA(Ala). Also edits incorrectly charged tRNA(Ala) via its editing domain. In presence of high levels of lactate, also acts as a protein lactyltransferase that mediates lactylation of lysine residues in target proteins, such as TEAD1, TP53/p53 and YAP1. Protein lactylation takes place in a two-step reaction: lactate is first activated by ATP to form lactate-AMP and then transferred to lysine residues of target proteins. Acts as an inhibitor of TP53/p53 activity by catalyzing lactylation of TP53/p53. Acts as a positive regulator of the Hippo pathway by mediating lactylation of TEAD1 and YAP1. The polypeptide is Alanine--tRNA ligase, cytoplasmic (Aars1) (Rattus norvegicus (Rat)).